Consider the following 106-residue polypeptide: ATP-dependent Clp protease adapter protein ClpS (106 aa).

It belongs to the ClpS family. In terms of assembly, binds to the N-terminal domain of the chaperone ClpA.

Its function is as follows. Involved in the modulation of the specificity of the ClpAP-mediated ATP-dependent protein degradation. The protein is ATP-dependent Clp protease adapter protein ClpS of Erwinia tasmaniensis (strain DSM 17950 / CFBP 7177 / CIP 109463 / NCPPB 4357 / Et1/99).